The following is a 355-amino-acid chain: 3-isopropylmalate dehydrogenase (355 aa).

Residues Arg90, Arg100, Arg128, and Asp222 each coordinate substrate. Asp222, Asp246, and Asp250 together coordinate Mg(2+). 280 to 292 (GSAPDIAGKGIAN) provides a ligand contact to NAD(+).

Belongs to the isocitrate and isopropylmalate dehydrogenases family. LeuB type 1 subfamily. Homodimer. Requires Mg(2+) as cofactor. The cofactor is Mn(2+).

Its subcellular location is the cytoplasm. It catalyses the reaction (2R,3S)-3-isopropylmalate + NAD(+) = 4-methyl-2-oxopentanoate + CO2 + NADH. It functions in the pathway amino-acid biosynthesis; L-leucine biosynthesis; L-leucine from 3-methyl-2-oxobutanoate: step 3/4. Catalyzes the oxidation of 3-carboxy-2-hydroxy-4-methylpentanoate (3-isopropylmalate) to 3-carboxy-4-methyl-2-oxopentanoate. The product decarboxylates to 4-methyl-2 oxopentanoate. This Burkholderia multivorans (strain ATCC 17616 / 249) protein is 3-isopropylmalate dehydrogenase.